We begin with the raw amino-acid sequence, 1257 residues long: Protein flightless-1 homolog (1257 aa).

16 LRR repeats span residues 6-31, 32-54, 56-77, 78-102, 103-126, 128-148, 149-172, 174-195, 197-221, 222-244, 246-267, 268-290, 292-315, 316-338, 339-361, and 363-384; these read LQFV…VEQM, TQMT…LSRC, NLEH…LSDL, PRLR…IFRM, KDLT…EYAK, SIVL…VCAN, LIDL…IRRL, MLQS…QLPS, TSLS…LDDM, HNLR…LFKL, NLRK…EGEW, ENLE…VVKL, RLTK…IGKL, IQLT…ISRC, VKLQ…IHLL, and DLKV…PNDA. Gelsolin-like repeat units follow at residues 523–600, 640–714, 759–832, and 1168–1243; these read MDEA…EEFL, AVEM…PEFW, ELPK…MMFR, and EKTV…CRFR.

The protein belongs to the villin/gelsolin family.

In terms of biological role, may play a key role in embryonic cellularization by interacting with both the cytoskeleton and other cellular components. The protein is Protein flightless-1 homolog (fli-1) of Caenorhabditis elegans.